The chain runs to 1486 residues: Phosphatidylinositol 3-kinase C2 domain-containing subunit gamma (1486 aa).

Positions 285 to 371 (KTKFNIHIFI…IQLHLQKSRE (87 aa)) constitute a PI3K-RBD domain. The C2 PI3K-type domain maps to 521–669 (LPSHLSFTVY…SPVTLQIDFP (149 aa)). Residues 684–860 (RSNLEEPLKE…QKLLAALQFC (177 aa)) form the PIK helical domain. Positions 929–1207 (DHDACSYFTS…KIKESLECFP (279 aa)) constitute a PI3K/PI4K catalytic domain. The segment at 935–941 (YFTSNAL) is G-loop. The segment at 1071–1079 (GVCDRHNDN) is catalytic loop. An activation loop region spans residues 1090-1116 (HIDFGKFLGHAQTFGGIKRDRAPFIFT). In terms of domain architecture, PX spans 1240–1352 (LSTTRSIERA…SFFLSEAVQQ (113 aa)). The C2 domain occupies 1369-1486 (KKPKVQLVIS…KWYPLGNSII (118 aa)).

It belongs to the PI3/PI4-kinase family. Highly expressed in liver, prostate and testis. Lower levels in small intestine, kidney and pancreas.

Its subcellular location is the membrane. It carries out the reaction a 1,2-diacyl-sn-glycero-3-phospho-(1D-myo-inositol 4-phosphate) + ATP = a 1,2-diacyl-sn-glycero-3-phospho-(1D-myo-inositol-3,4-bisphosphate) + ADP + H(+). It catalyses the reaction a 1,2-diacyl-sn-glycero-3-phospho-(1D-myo-inositol) + ATP = a 1,2-diacyl-sn-glycero-3-phospho-(1D-myo-inositol-3-phosphate) + ADP + H(+). Generates phosphatidylinositol 3-phosphate (PtdIns3P) and phosphatidylinositol 3,4-bisphosphate (PtdIns(3,4)P2) that act as second messengers. May play a role in SDF1A-stimulated chemotaxis. This chain is Phosphatidylinositol 3-kinase C2 domain-containing subunit gamma (PIK3C2G), found in Homo sapiens (Human).